Consider the following 566-residue polypeptide: Proline--tRNA ligase (566 aa).

It belongs to the class-II aminoacyl-tRNA synthetase family. ProS type 1 subfamily. In terms of assembly, homodimer.

The protein resides in the cytoplasm. The enzyme catalyses tRNA(Pro) + L-proline + ATP = L-prolyl-tRNA(Pro) + AMP + diphosphate. In terms of biological role, catalyzes the attachment of proline to tRNA(Pro) in a two-step reaction: proline is first activated by ATP to form Pro-AMP and then transferred to the acceptor end of tRNA(Pro). As ProRS can inadvertently accommodate and process non-cognate amino acids such as alanine and cysteine, to avoid such errors it has two additional distinct editing activities against alanine. One activity is designated as 'pretransfer' editing and involves the tRNA(Pro)-independent hydrolysis of activated Ala-AMP. The other activity is designated 'posttransfer' editing and involves deacylation of mischarged Ala-tRNA(Pro). The misacylated Cys-tRNA(Pro) is not edited by ProRS. The sequence is that of Proline--tRNA ligase from Staphylococcus haemolyticus (strain JCSC1435).